The following is a 113-amino-acid chain: Prefoldin subunit beta (113 aa).

The protein belongs to the prefoldin subunit beta family. In terms of assembly, heterohexamer of two alpha and four beta subunits.

Its subcellular location is the cytoplasm. In terms of biological role, molecular chaperone capable of stabilizing a range of proteins. Seems to fulfill an ATP-independent, HSP70-like function in archaeal de novo protein folding. The polypeptide is Prefoldin subunit beta (Methanococcus vannielii (strain ATCC 35089 / DSM 1224 / JCM 13029 / OCM 148 / SB)).